The chain runs to 268 residues: L-aspartate dehydrogenase (268 aa).

2 residues coordinate NAD(+): Ala125 and Asn191. The active site involves His221.

This sequence belongs to the L-aspartate dehydrogenase family.

The catalysed reaction is L-aspartate + NADP(+) + H2O = oxaloacetate + NH4(+) + NADPH + H(+). The enzyme catalyses L-aspartate + NAD(+) + H2O = oxaloacetate + NH4(+) + NADH + H(+). It functions in the pathway cofactor biosynthesis; NAD(+) biosynthesis; iminoaspartate from L-aspartate (dehydrogenase route): step 1/1. Specifically catalyzes the NAD or NADP-dependent dehydrogenation of L-aspartate to iminoaspartate. This is L-aspartate dehydrogenase from Brucella anthropi (strain ATCC 49188 / DSM 6882 / CCUG 24695 / JCM 21032 / LMG 3331 / NBRC 15819 / NCTC 12168 / Alc 37) (Ochrobactrum anthropi).